Here is a 337-residue protein sequence, read N- to C-terminus: MTNSVFQGRSLLAEKDFTKSELEYLIDFSLHLKDLKKKGIPHHYLEGKNIALLFEKNSTRTRAAFTTAAIDLGAHPEFLGKNDIQLGKKESVEDTAKVLGSMFDGIEFRALAKVVEDLAKYSGVPVWNGLTDEWHPTQMIADFMTVKENFGKLKGVTLTYVGDGRNNMANSLLVTGSMLGVNIHIVAPDSLQPTQEVRDLAEGYAKETGSKNMITSDVDAGVKGSDVLYTDVWVSMGEEDKFEERVNLLKPYQINMDMVKKTGNENMIIMHCLPAFHDIETEYGKKIDEQFGIQEMEITDEAFRSKYARQFEEAENRMHSIKAIMAATLGNLFIPQA.

Residues 58–61 (STRT), Q85, R109, and 135–138 (HPTQ) each bind carbamoyl phosphate. Residues N167, D231, and 235-236 (SM) each bind L-ornithine. Carbamoyl phosphate-binding positions include 272–273 (CL) and R317.

It belongs to the aspartate/ornithine carbamoyltransferase superfamily. OTCase family.

It is found in the cytoplasm. It carries out the reaction carbamoyl phosphate + L-ornithine = L-citrulline + phosphate + H(+). Its pathway is amino-acid degradation; L-arginine degradation via ADI pathway; carbamoyl phosphate from L-arginine: step 2/2. Functionally, reversibly catalyzes the transfer of the carbamoyl group from carbamoyl phosphate (CP) to the N(epsilon) atom of ornithine (ORN) to produce L-citrulline. The protein is Ornithine carbamoyltransferase, catabolic (arcB) of Latilactobacillus sakei (Lactobacillus sakei).